The sequence spans 441 residues: Enolase (441 aa).

Glutamine 163 contributes to the (2R)-2-phosphoglycerate binding site. Catalysis depends on glutamate 205, which acts as the Proton donor. Residues aspartate 242, glutamate 288, and aspartate 315 each coordinate Mg(2+). Lysine 340, arginine 369, serine 370, and lysine 391 together coordinate (2R)-2-phosphoglycerate. Catalysis depends on lysine 340, which acts as the Proton acceptor.

It belongs to the enolase family. Mg(2+) is required as a cofactor.

Its subcellular location is the cytoplasm. The protein localises to the secreted. It localises to the cell surface. It carries out the reaction (2R)-2-phosphoglycerate = phosphoenolpyruvate + H2O. It functions in the pathway carbohydrate degradation; glycolysis; pyruvate from D-glyceraldehyde 3-phosphate: step 4/5. Catalyzes the reversible conversion of 2-phosphoglycerate (2-PG) into phosphoenolpyruvate (PEP). It is essential for the degradation of carbohydrates via glycolysis. The chain is Enolase from Ligilactobacillus salivarius (strain UCC118) (Lactobacillus salivarius).